A 357-amino-acid chain; its full sequence is Non-structural protein NS2 (357 aa).

2 disordered regions span residues P169 to K191 and D229 to T266. Basic and acidic residues predominate over residues E233–S249. Over residues D250 to D260 the composition is skewed to acidic residues.

Belongs to the orbivirus non-structural protein NS2 family.

Single-stranded RNA-binding protein. The chain is Non-structural protein NS2 (Segment-8) from Antilocapra americana (Pronghorn).